The primary structure comprises 573 residues: Sulfite oxidase, mitochondrial (573 aa).

The N-terminal 34 residues, 1–34, are a transit peptide targeting the mitochondrion; it reads MRLLRPSWAGLLRGRHHQHQRHHRRLLLTTSRGS. Over residues 14–26 the composition is skewed to basic residues; it reads GRHHQHQRHHRRL. The interval 14–50 is disordered; the sequence is GRHHQHQRHHRRLLLTTSRGSNGEREEQQHSQWSSPG. The 79-residue stretch at 108–186 folds into the Cytochrome b5 heme-binding domain; the sequence is LPTYRAEEVE…LEGFRIGNLE (79 aa). Positions 144 and 168 each coordinate heme b. Residues 190–199 form a hinge region; the sequence is VTNVDDELGS. The segment at 200–423 is moco domain; that stretch reads PWSQEPQRHA…DSHWQQNDYK (224 aa). Mo-molybdopterin-binding positions include 240 to 244, C287, D344, H383, R388, and 399 to 401; these read YVRNH and NVK. The segment at 424-567 is homodimerization; that stretch reads GFSPSTDWDT…RGVLANAYHK (144 aa).

Heme b serves as cofactor. It depends on Mo-molybdopterin as a cofactor. As to expression, expressed in the ensheathing glia with relatively weak expression in the CNS cortex (at protein level).

The protein localises to the mitochondrion intermembrane space. It carries out the reaction sulfite + O2 + H2O = sulfate + H2O2. The protein operates within energy metabolism; sulfur metabolism. Functionally, required in ensheathing glial cells for normal larval locomotion. Oxidizes sulfite which is required to maintain glutamate homeostasis and as a consequence, neuronal network function. The chain is Sulfite oxidase, mitochondrial from Drosophila melanogaster (Fruit fly).